The chain runs to 407 residues: tRNA (guanine-N(7)-)-methyltransferase non-catalytic subunit wuho (407 aa).

WD repeat units follow at residues 83–124 (AIEV…ARLL), 171–210 (GHLS…DIHS), and 214–252 (GHKE…ELLI).

It belongs to the WD repeat TRM82 family. In terms of assembly, forms a heterodimer with the catalytic subunit Mettl1. Interacts with mei-P26 and weakly interacts with bgcn; required for the function or formation of the mei-P26-bgcn-bam-sxl complex. Interacts with nanos; may be involved in mei-P26-dependent derepression of the BMP signaling pathway. Interacts with Myc; the interaction may be mediated by mei-P26 and may be involved in the regulation of ribosome biogenesis. As to expression, in testis, it is present at high level in hub cells, a niche for germline stem cells of testis. Ubiquitously expressed in all testicular cells throughout spermatogenesis. Ubiquitously expressed in all germline and somatic cells of the ovary.

The protein resides in the nucleus. It localises to the cytoplasm. The protein operates within tRNA modification; N(7)-methylguanine-tRNA biosynthesis. Functionally, required for the Mettl1-dependent formation of N(7)-methylguanine at position 46 (m7G46) in tRNA. In the Mettl1-wuho methyltransferase complex, it is required to stabilize and induce conformational changes of the catalytic subunit. Required for binding of nanos mRNA and repression of translation by the mei-P26-bgcn-bam-sxl complex. May cooperate with mei-P26 and nanos to derepress the BMP signaling pathway. May cooperate with mei-P26 to suppress expression of a subset of microRNAs. May cooperate with mei-P26 to regulate bam expression levels in germline cells during gametogenesis. Required to promote mitosis to meiosis transition during gametogenesis. May regulate germline cell division in part by regulating ribosome biogenesis. The polypeptide is tRNA (guanine-N(7)-)-methyltransferase non-catalytic subunit wuho (Drosophila ananassae (Fruit fly)).